The sequence spans 228 residues: Auxin-responsive protein IAA14 (228 aa).

The short motif at 8 to 12 (LCLGL) is the EAR-like (transcriptional repression) element. Positions 110-210 (VAFVKVSMDG…SCKRLRIMKG (101 aa)) constitute a PB1 domain.

It belongs to the Aux/IAA family. In terms of assembly, homodimers and heterodimers. Interacts with TPL. In terms of tissue distribution, preferentially expressed in roots and flowers.

Its subcellular location is the nucleus. In terms of biological role, aux/IAA proteins are short-lived transcriptional factors that function as repressors of early auxin response genes at low auxin concentrations. Repression is thought to result from the interaction with auxin response factors (ARFs), proteins that bind to the auxin-responsive promoter element (AuxRE). Formation of heterodimers with ARF proteins may alter their ability to modulate early auxin response genes expression. The chain is Auxin-responsive protein IAA14 (IAA14) from Arabidopsis thaliana (Mouse-ear cress).